The chain runs to 93 residues: Cobalt transport protein CbiN (93 aa).

Transmembrane regions (helical) follow at residues 5–25 (LMLL…NHGG) and 63–83 (LLFT…LGYC).

It belongs to the CbiN family. In terms of assembly, forms an energy-coupling factor (ECF) transporter complex composed of an ATP-binding protein (A component, CbiO), a transmembrane protein (T component, CbiQ) and 2 possible substrate-capture proteins (S components, CbiM and CbiN) of unknown stoichimetry.

The protein localises to the cell inner membrane. The protein operates within cofactor biosynthesis; adenosylcobalamin biosynthesis. Part of the energy-coupling factor (ECF) transporter complex CbiMNOQ involved in cobalt import. The chain is Cobalt transport protein CbiN from Salmonella agona (strain SL483).